Reading from the N-terminus, the 244-residue chain is MFVPCAENVNDLDFSGFTLILPAVSIGNVGQLATDLTISSLSSSRHLIGYLHDASILPVVGNDAFARLGHEKGELNLSAEVYQSTEKRLVIVQQRAPISKGHYANYCQKLLAWIKRCSFKQVVLLSSISATDRVDAQLQGSPLRYMTTSVSQQLSSSFDKLSWVQLEKRPKFPDMTKESDELQFYLPGGGVTKRFFDRCEKEDVPLAVLMTFCSEGDNIADAVSLFLYLNDWLEITNKDTVGVN.

It belongs to the PSMG2 family. In terms of assembly, forms a heterodimer with psmg1.

Its subcellular location is the nucleus. In terms of biological role, chaperone protein which promotes assembly of the 20S proteasome as part of a heterodimer with psmg1. This chain is Proteasome assembly chaperone 2 (psmg2), found in Nematostella vectensis (Starlet sea anemone).